We begin with the raw amino-acid sequence, 156 residues long: MSRRIRAQKRPVPPDPVYNSRLISMTIRRLMASGKKSLASRILYDALKIIEERTNQDPLEVFETAVRNVTPLVEVKARRVGGATYQVPMEVRSDRGIALALRWIIRFSRQRPGRSMVSKLANELIDAANETGAAIRKREETHRMAEANKAFAHYRY.

Belongs to the universal ribosomal protein uS7 family. Part of the 30S ribosomal subunit. Contacts proteins S9 and S11.

In terms of biological role, one of the primary rRNA binding proteins, it binds directly to 16S rRNA where it nucleates assembly of the head domain of the 30S subunit. Is located at the subunit interface close to the decoding center, probably blocks exit of the E-site tRNA. This chain is Small ribosomal subunit protein uS7, found in Acaryochloris marina (strain MBIC 11017).